The sequence spans 21 residues: Venom nerve growth factor Bco12 (21 aa).

Belongs to the NGF-beta family. In terms of assembly, homodimer; non-covalently linked. Glycosylated. As to expression, expressed by the venom gland.

The protein resides in the secreted. Its function is as follows. Nerve growth factor is important for the development and maintenance of the sympathetic and sensory nervous systems. It stimulates division and differentiation of sympathetic and embryonic sensory neurons as well as basal forebrain cholinergic neurons in the brain. Its relevance in the snake venom is not clear. However, it has been shown to inhibit metalloproteinase-dependent proteolysis of platelet glycoprotein Ib alpha, suggesting a metalloproteinase inhibition to prevent metalloprotease autodigestion and/or protection against prey proteases. Binds a lipid between the two protein chains in the homodimer. The lipid-bound form promotes histamine relase from mouse mast cells, contrary to the lipid-free form. This Bothrops cotiara (Cotiara) protein is Venom nerve growth factor Bco12.